A 598-amino-acid polypeptide reads, in one-letter code: NADH-quinone oxidoreductase subunit C/D (598 aa).

The tract at residues 1–189 (MTDLTTSDSL…DPYVLTKQKE (189 aa)) is NADH dehydrogenase I subunit C. Positions 213–598 (DFMFLNLGPN…IDFVMSDVDR (386 aa)) are NADH dehydrogenase I subunit D.

In the N-terminal section; belongs to the complex I 30 kDa subunit family. This sequence in the C-terminal section; belongs to the complex I 49 kDa subunit family. As to quaternary structure, NDH-1 is composed of 13 different subunits. Subunits NuoB, CD, E, F, and G constitute the peripheral sector of the complex.

It is found in the cell inner membrane. It catalyses the reaction a quinone + NADH + 5 H(+)(in) = a quinol + NAD(+) + 4 H(+)(out). Functionally, NDH-1 shuttles electrons from NADH, via FMN and iron-sulfur (Fe-S) centers, to quinones in the respiratory chain. The immediate electron acceptor for the enzyme in this species is believed to be ubiquinone. Couples the redox reaction to proton translocation (for every two electrons transferred, four hydrogen ions are translocated across the cytoplasmic membrane), and thus conserves the redox energy in a proton gradient. In Yersinia pestis bv. Antiqua (strain Angola), this protein is NADH-quinone oxidoreductase subunit C/D.